The following is a 211-amino-acid chain: Protein U63 (211 aa).

Belongs to the herpesviridae UL92 family.

This is Protein U63 (U63) from Human herpesvirus 7 (strain JI) (HHV-7).